The sequence spans 432 residues: Enolase (432 aa).

Q167 lines the (2R)-2-phosphoglycerate pocket. The active-site Proton donor is the E209. Mg(2+)-binding residues include D246, E289, and D316. Residues K341, R370, S371, and K392 each contribute to the (2R)-2-phosphoglycerate site. K341 functions as the Proton acceptor in the catalytic mechanism.

This sequence belongs to the enolase family. Requires Mg(2+) as cofactor.

The protein resides in the cytoplasm. Its subcellular location is the secreted. The protein localises to the cell surface. The catalysed reaction is (2R)-2-phosphoglycerate = phosphoenolpyruvate + H2O. Its pathway is carbohydrate degradation; glycolysis; pyruvate from D-glyceraldehyde 3-phosphate: step 4/5. Its function is as follows. Catalyzes the reversible conversion of 2-phosphoglycerate (2-PG) into phosphoenolpyruvate (PEP). It is essential for the degradation of carbohydrates via glycolysis. In Thermotoga neapolitana (strain ATCC 49049 / DSM 4359 / NBRC 107923 / NS-E), this protein is Enolase.